Here is a 351-residue protein sequence, read N- to C-terminus: MPSETLWEIAKAEVEKRRCHGSDGDGMEIGEKSVFFIGSKNGGKTTIILRCLDRDEPAKPTLALEYTYGRKTKGHNTPKDIAHFWELGGGTSLLDLISIPITVDTLRTFSIVLVLDLSKPNDLWPTMENLLQATKSHVDKVTMKLGKANSKASSEMRQRMWSVMQKDHPDRELIDPFPIPLVIIGSKYDIFQDFDPEKRKVICKTLRFVAHYYGASLMFTSKSEALLLKMRGVINQLAFGIDKSKSMCVDQNKPLFITAGLDSLCQIGSPPVPDSDIGKLQAHSPMELWKKVYEKLFPPKSTSTLKAIQDPARDPQYAESEVDEMRVQKDQELEQYKRSSSKTWKQIELDS.

The interval 304-335 is disordered; sequence TLKAIQDPARDPQYAESEVDEMRVQKDQELEQ. Basic and acidic residues predominate over residues 323–335; that stretch reads DEMRVQKDQELEQ.

Belongs to the dynein light intermediate chain family. Light intermediate chain of the cytoplasmic dynein complex 2, a multisubunit complex composed at least of eleven different proteins. The cytoplasmic dynein 2 complex consists of two catalytic heavy chains (HCs) and a number of non-catalytic subunits presented by intermediate chains (ICs), light intermediate chains (LICs) and light chains (LCs). Among them, a heavy chain (DYNC2H1), two intermediate chains (DYNC2I2 and DYNC2I1), a light intermediate chain (DYNC2LI1), and a light chain (DYNLT2B) are unique to the dynein-2 complex, but a subset of light chains are also shared by dynein-1 and dynein-2 complexes. Dynein-2 complex is built around two copies of cytoplasmic dynein 2 heavy chain 1 (DYNC2H1). The C-terminal region forms the motor domain, which converts the energy from ATP hydrolysis into movement. Its N-terminal region forms the tail, an extended structure that binds the other subunits and holds the two heavy chains in a homodimer. Interacts with DYNC2H1 (via N-terminus); this interaction stabilizes the dynein-2 complex structure.

It is found in the cytoplasm. The protein localises to the cell projection. The protein resides in the cilium. It localises to the cytoskeleton. Its subcellular location is the cilium basal body. It is found in the cilium axoneme. The protein localises to the microtubule organizing center. The protein resides in the centrosome. In terms of biological role, acts as one of several non-catalytic accessory components of the cytoplasmic dynein 2 complex (dynein-2 complex), a motor protein complex that drives the movement of cargos along microtubules within cilia and flagella in concert with the intraflagellar transport (IFT) system, facilitating the assembly of these organelles. Involved in the regulation of ciliary length. The protein is Cytoplasmic dynein 2 light intermediate chain 1 (Dync2li1) of Rattus norvegicus (Rat).